The chain runs to 423 residues: AUGMIN subunit 4 (423 aa).

A coiled-coil region spans residues I267–K287.

The protein belongs to the HAUS4 family. Part of the augmin complex composed of 8 subunits. The complex acts on microtubules and interacts with gamma-tubulin in spindles and the phragmoplast.

Its subcellular location is the cytoplasm. The protein resides in the cytoskeleton. It localises to the spindle. The protein localises to the phragmoplast. Its function is as follows. Involved in microtubules reorganization during spindle and phragmoplast development. The sequence is that of AUGMIN subunit 4 (AUG4) from Arabidopsis thaliana (Mouse-ear cress).